The primary structure comprises 285 residues: Ribose-phosphate pyrophosphokinase (285 aa).

Residues 34 to 36 (DGE) and 91 to 92 (RQ) contribute to the ATP site. Residues His-124 and Asp-162 each coordinate Mg(2+). Lys-185 is an active-site residue. Residues Arg-187, Asp-211, and 215-219 (STGGT) contribute to the D-ribose 5-phosphate site.

It belongs to the ribose-phosphate pyrophosphokinase family. Class III (archaeal) subfamily. It depends on Mg(2+) as a cofactor.

It is found in the cytoplasm. The catalysed reaction is D-ribose 5-phosphate + ATP = 5-phospho-alpha-D-ribose 1-diphosphate + AMP + H(+). It participates in metabolic intermediate biosynthesis; 5-phospho-alpha-D-ribose 1-diphosphate biosynthesis; 5-phospho-alpha-D-ribose 1-diphosphate from D-ribose 5-phosphate (route I): step 1/1. Its function is as follows. Involved in the biosynthesis of the central metabolite phospho-alpha-D-ribosyl-1-pyrophosphate (PRPP) via the transfer of pyrophosphoryl group from ATP to 1-hydroxyl of ribose-5-phosphate (Rib-5-P). The polypeptide is Ribose-phosphate pyrophosphokinase (Pyrococcus abyssi (strain GE5 / Orsay)).